A 283-amino-acid polypeptide reads, in one-letter code: MRIDVVTIFPDYLRPLELALVGRAASRDLVDIQTHDLRAWTHDVHRTVDDSPYGGGPGMVMRPEPWDAALRDIVARDPSRRPRVVVPTPAGVPFTQSYAAELAEQDWLIFCCGRYEGIDGRVVDAWADDEISIGDYVLAGGEVATLVMVEAVTRLLPGVVGNAESIIDDSFAHGLLEGPVYTRPPVWEGRAVPEILRSGDHAAIARWRREEALRRTCRRRPELLDRIELSDADRAVVASTIVAAHGGGDDPPVTGVEDAVTIAERGTIGDGPAPSGCASSHCS.

S-adenosyl-L-methionine contacts are provided by residues Gly113 and 133 to 138 (IGDYVL).

This sequence belongs to the RNA methyltransferase TrmD family. As to quaternary structure, homodimer.

It is found in the cytoplasm. The catalysed reaction is guanosine(37) in tRNA + S-adenosyl-L-methionine = N(1)-methylguanosine(37) in tRNA + S-adenosyl-L-homocysteine + H(+). Functionally, specifically methylates guanosine-37 in various tRNAs. The sequence is that of tRNA (guanine-N(1)-)-methyltransferase from Parafrankia sp. (strain EAN1pec).